The primary structure comprises 940 residues: Isoleucine--tRNA ligase (940 aa).

A 'HIGH' region motif is present at residues 58 to 68; it reads PYANGDIHIGH. Glu-564 is an L-isoleucyl-5'-AMP binding site. The short motif at 605 to 609 is the 'KMSKS' region element; sequence KMSKS. ATP is bound at residue Lys-608. Positions 903, 906, 923, and 926 each coordinate Zn(2+).

It belongs to the class-I aminoacyl-tRNA synthetase family. IleS type 1 subfamily. In terms of assembly, monomer. Requires Zn(2+) as cofactor.

The protein resides in the cytoplasm. It catalyses the reaction tRNA(Ile) + L-isoleucine + ATP = L-isoleucyl-tRNA(Ile) + AMP + diphosphate. In terms of biological role, catalyzes the attachment of isoleucine to tRNA(Ile). As IleRS can inadvertently accommodate and process structurally similar amino acids such as valine, to avoid such errors it has two additional distinct tRNA(Ile)-dependent editing activities. One activity is designated as 'pretransfer' editing and involves the hydrolysis of activated Val-AMP. The other activity is designated 'posttransfer' editing and involves deacylation of mischarged Val-tRNA(Ile). The protein is Isoleucine--tRNA ligase of Shewanella pealeana (strain ATCC 700345 / ANG-SQ1).